The chain runs to 296 residues: Mycothiol acetyltransferase (296 aa).

2 consecutive N-acetyltransferase domains span residues 8–146 (RSPE…PPVE) and 151–296 (ISVR…GPPV). Glu-39 contacts 1D-myo-inositol 2-(L-cysteinylamino)-2-deoxy-alpha-D-glucopyranoside. 76 to 78 (VVT) lines the acetyl-CoA pocket. Glu-178, Lys-220, and Glu-228 together coordinate 1D-myo-inositol 2-(L-cysteinylamino)-2-deoxy-alpha-D-glucopyranoside. Acetyl-CoA contacts are provided by residues 232–234 (VGV) and 239–245 (QGEGLGR). Tyr-266 lines the 1D-myo-inositol 2-(L-cysteinylamino)-2-deoxy-alpha-D-glucopyranoside pocket.

This sequence belongs to the acetyltransferase family. MshD subfamily. In terms of assembly, monomer.

It carries out the reaction 1D-myo-inositol 2-(L-cysteinylamino)-2-deoxy-alpha-D-glucopyranoside + acetyl-CoA = mycothiol + CoA + H(+). Catalyzes the transfer of acetyl from acetyl-CoA to desacetylmycothiol (Cys-GlcN-Ins) to form mycothiol. This chain is Mycothiol acetyltransferase, found in Kytococcus sedentarius (strain ATCC 14392 / DSM 20547 / JCM 11482 / CCUG 33030 / NBRC 15357 / NCTC 11040 / CCM 314 / 541) (Micrococcus sedentarius).